Consider the following 79-residue polypeptide: Conotoxin ArMKLT2-031 (79 aa).

A signal peptide spans 1 to 22; sequence MKLTCVLIIAVLFLTACQLTTG. Residues 23-46 constitute a propeptide that is removed on maturation; the sequence is ETYSRGEQKDHALRSTDKNSKLTR. Glutamine 47 is modified (pyrrolidone carboxylic acid). Intrachain disulfides connect cysteine 48/cysteine 62, cysteine 55/cysteine 66, and cysteine 61/cysteine 73.

Belongs to the conotoxin O1 superfamily. As to expression, expressed by the venom duct.

It localises to the secreted. This chain is Conotoxin ArMKLT2-031, found in Conus arenatus (Sand-dusted cone).